The sequence spans 432 residues: DnaJ-like protein 1 (432 aa).

The 70-residue stretch at 4–73 folds into the J domain; that stretch reads DTEYYDLLGV…RAKYDKYGRK (70 aa). A disordered region spans residues 117 to 187; it reads NAEDEAEKEK…KKNEQVGAEA (71 aa).

The protein belongs to the DnaJ family. In terms of assembly, interacts with SLN1.

The protein localises to the cytoplasm. Functionally, required for peroxisomal protein import which maintains the function of peroxisomes. The polypeptide is DnaJ-like protein 1 (DJP1) (Saccharomyces cerevisiae (strain ATCC 204508 / S288c) (Baker's yeast)).